The chain runs to 952 residues: MFKFFSSFGDSNEKEIRALEPLVDKINQLENSFTTLSDEALKAKTIEFRARLKNTFETTTAGIQEDITSTTAELAEAQKIADNSKQSRLKAKLESLNKDLSAKENTALNGILPEAFAAVREASRRTIGLRHYDVQLIGGIVLHHGKIAEMRTGEGKTLVATLPLYLNSLLGKGVHLVTVNDYLARRDAYWMGPVYHALGVSVSSIYPMQTPTEELPSRLFDPDYTSEIPGDPWTHFRPISRQEAYKADITYGTSTEFGFDYLRDNLRPDLAQCVQRDMNYAIVDEIDNLLIDEARTPLIISAPDTEAGKLYDVFARLSPRLVVVKDYEINEKDRNAELTEDGWANVEKLLSREGVMKGNSLYDPQNAPLIRHLRNALSAKEFYKKDHQYVVKEGEIIIIDEFTGRMMLGRRYSEGLHQAIEAKEHVKVQQESKTYATVTIQNLFRMYRKLCGMTGTAATEAEEFSKIYKLEVVIIPTNKPAVREDYGDQIYKDQSAKFKAVVNEIDEMRKLGRPVLVGTVSIENSEMLSNMLKRQGIEHKVLNAKQHEKEAQVVAEAGKPGAVTVATNMAGRGVDILLGGKEPTKDDAKVYNEWQAHHQQVLEAGGLHVIGTERHESRRIDNQLRGRSGRQGDPGSSRFYVALDDDIMRRFGSERIQGIMEWAGMDENTPIENGLVSRTLENAQKRVEGYHFDVRKHLVEYDDVVNKHREVIYAERRKILSGADLKSNILDMIREEIITQTAEHTRGYDSSEWNLDGLVTHLNGIFTLPAEINAEALAKLSQEEITDLLTRTAEELYQKKEDETGAGSMRLLERIIMLHTLDSLWVEHLTIMENLRREIGLQAFAQRDPLIAYKNEGHVRFQELLETIKHDVVHNIYRVGIQIQHQTESATAKAASRPVQQQKPLPAAPAAAIPGVSAKAATQSTTPAAKEIGRNDPCPCGSGKKYKKCCGK.

ATP is bound by residues Gln-135, Gly-153 to Thr-157, and Asp-575. A compositionally biased stretch (low complexity) spans Ala-907–Ala-921. A disordered region spans residues Ala-907 to Tyr-946. Cys-938, Cys-940, Cys-949, and Cys-950 together coordinate Zn(2+).

The protein belongs to the SecA family. As to quaternary structure, monomer and homodimer. Part of the essential Sec protein translocation apparatus which comprises SecA, SecYEG and auxiliary proteins SecDF. Other proteins may also be involved. Zn(2+) serves as cofactor.

It is found in the cell membrane. The protein resides in the cytoplasm. The enzyme catalyses ATP + H2O + cellular proteinSide 1 = ADP + phosphate + cellular proteinSide 2.. Functionally, part of the Sec protein translocase complex. Interacts with the SecYEG preprotein conducting channel. Has a central role in coupling the hydrolysis of ATP to the transfer of proteins into and across the cell membrane, serving as an ATP-driven molecular motor driving the stepwise translocation of polypeptide chains across the membrane. The polypeptide is Protein translocase subunit SecA (Dehalococcoides mccartyi (strain CBDB1)).